The following is a 115-amino-acid chain: Protein translation factor SUI1 homolog (115 aa).

The protein belongs to the SUI1 family.

In terms of biological role, probably involved in translation. This is Protein translation factor SUI1 homolog (TIF) from Zea mays (Maize).